Consider the following 150-residue polypeptide: Endoribonuclease YbeY (150 aa).

3 residues coordinate Zn(2+): histidine 112, histidine 116, and aspartate 122.

This sequence belongs to the endoribonuclease YbeY family. Requires Zn(2+) as cofactor.

The protein localises to the cytoplasm. In terms of biological role, single strand-specific metallo-endoribonuclease involved in late-stage 70S ribosome quality control and in maturation of the 3' terminus of the 16S rRNA. In Protochlamydia amoebophila (strain UWE25), this protein is Endoribonuclease YbeY.